A 71-amino-acid chain; its full sequence is Small ribosomal subunit protein bS21 (71 aa).

The interval Glu39–Tyr71 is disordered. A compositionally biased stretch (basic residues) spans Thr43–Lys59. Positions Leu60 to Tyr71 are enriched in basic and acidic residues.

It belongs to the bacterial ribosomal protein bS21 family.

The sequence is that of Small ribosomal subunit protein bS21 from Vibrio atlanticus (strain LGP32) (Vibrio splendidus (strain Mel32)).